A 303-amino-acid polypeptide reads, in one-letter code: MEKYEKLEKVGEGTYGKVYKAQDRATGQLVALKKTRLEMDEEGIPPTALREISILRLLSQSLYVVRLLSVEQATKNGKPVLYLVFEFLDTDLKKFVDAYRKGPNPRPLPTNVIKSFLYQLCKGVAHCHGHGVLHRDLKPQNLLVDKEKGILKIADLGLGRAFTVPMKSYTHEIVTLWYRAPEVLLGSTHYSTGVDIWSVGCIFAEMVRRQALFPGDSELQQLLHIFRLLGTPTEEQWPGVTDLRDWHEFPQWKPQILERQVPSLEPEGVDLLSKMLQYNPANRISAKAAMEHPYFDSLDKSQF.

The region spanning 4 to 295 is the Protein kinase domain; the sequence is YEKLEKVGEG…AKAAMEHPYF (292 aa). Residues 10–18 and K33 contribute to the ATP site; that span reads VGEGTYGKV. Residue T14 is modified to Phosphothreonine. Residue Y15 is modified to Phosphotyrosine. The Proton acceptor role is filled by D136. The residue at position 170 (T170) is a Phosphothreonine.

It belongs to the protein kinase superfamily. CMGC Ser/Thr protein kinase family. CDC2/CDKX subfamily. As to expression, expressed in actively dividing cells: root and shoot apical meristems, and young leaves.

It catalyses the reaction L-seryl-[protein] + ATP = O-phospho-L-seryl-[protein] + ADP + H(+). It carries out the reaction L-threonyl-[protein] + ATP = O-phospho-L-threonyl-[protein] + ADP + H(+). The catalysed reaction is [DNA-directed RNA polymerase] + ATP = phospho-[DNA-directed RNA polymerase] + ADP + H(+). This chain is Cyclin-dependent kinase B1-1 (CDKB1-1), found in Oryza sativa subsp. japonica (Rice).